The primary structure comprises 131 residues: D-ribose pyranase (131 aa).

The active-site Proton donor is His20. Residues Asp28, His98, and Tyr120–Asn122 each bind substrate.

The protein belongs to the RbsD / FucU family. RbsD subfamily. Homodecamer.

Its subcellular location is the cytoplasm. It catalyses the reaction beta-D-ribopyranose = beta-D-ribofuranose. It functions in the pathway carbohydrate metabolism; D-ribose degradation; D-ribose 5-phosphate from beta-D-ribopyranose: step 1/2. In terms of biological role, catalyzes the interconversion of beta-pyran and beta-furan forms of D-ribose. This Lactobacillus gasseri (strain ATCC 33323 / DSM 20243 / BCRC 14619 / CIP 102991 / JCM 1131 / KCTC 3163 / NCIMB 11718 / NCTC 13722 / AM63) protein is D-ribose pyranase.